Consider the following 362-residue polypeptide: Peptide chain release factor 1 (362 aa).

At Gln-237 the chain carries N5-methylglutamine. Residues 289–308 are disordered; it reads AAEISDTRRNLLGSGDRSDR.

Belongs to the prokaryotic/mitochondrial release factor family. In terms of processing, methylated by PrmC. Methylation increases the termination efficiency of RF1.

It is found in the cytoplasm. Peptide chain release factor 1 directs the termination of translation in response to the peptide chain termination codons UAG and UAA. This Vibrio cholerae serotype O1 (strain ATCC 39541 / Classical Ogawa 395 / O395) protein is Peptide chain release factor 1.